The chain runs to 390 residues: Ureide permease 1 (390 aa).

The Extracellular segment spans residues 1–9 (MYMIESKGG). The chain crosses the membrane as a helical span at residues 10 to 30 (AIACMLLALLFLGTWPAIMTL). Topologically, residues 31 to 44 (TERRGRLPQHTYLD) are cytoplasmic. Residues 45-65 (YTLTNLLAAVIIALTLGEIGP) traverse the membrane as a helical segment. At 66–78 (SRPNFFTQLSQDN) the chain is on the extracellular side. A helical membrane pass occupies residues 79 to 99 (WQSVMFAMAGGIVLSLGNLAT). Topologically, residues 100-101 (QY) are cytoplasmic. A helical transmembrane segment spans residues 102 to 122 (AWAYVGLSVTEVITASITVVI). The Extracellular segment spans residues 123–136 (GTTLNYFLDDRINR). The chain crosses the membrane as a helical span at residues 137 to 157 (AEVLFPGVACFLIAVCFGSAV). The Cytoplasmic segment spans residues 158-221 (HKSNAADNKT…RAIKVFGKST (64 aa)). 213–220 (AIKVFGKS) contacts ATP. A helical transmembrane segment spans residues 222–242 (IIGLVITFFAGICFSLFSPAF). At 243-261 (NLATNDQWHTLKHGVPKLN) the chain is on the extracellular side. Residues 262 to 282 (VYTAFFYFSISAFVVALILNI) form a helical membrane-spanning segment. Residues 283–307 (RFLYWPILGLPRSSFKAYLNDWNGR) lie on the Cytoplasmic side of the membrane. A helical membrane pass occupies residues 308 to 328 (GWSFLAGFLCGFGNGLQFMGG). Residues 329 to 333 (QAAGY) are Extracellular-facing. Residues 334–354 (AAADAVQALPLVSTFWGILLF) traverse the membrane as a helical segment. Topologically, residues 355–363 (GEYRRSSRK) are cytoplasmic. A helical membrane pass occupies residues 364 to 384 (TYTLLISMLLMFIVAVAVLMA). Residues 385 to 390 (SSGHRK) lie on the Extracellular side of the membrane.

The protein belongs to the plant ureide permease (TC 2.A.7.19) family. In terms of tissue distribution, expressed in leaves, flowers, roots and stems.

The protein localises to the membrane. Its function is as follows. Proton-coupled transporter that transports a wide spectrum of oxo derivatives of heterocyclic nitrogen compounds, including allantoin, uric acid and xanthine, but not adenine. Mediates high affinity transport of uracil and 5-fluorouracil (a toxic uracil analog). Mediates transport of free pyrimidines and may function during early seedling development in salvage pathways, by the utilization of pyrimidines from seed storage tissue. This chain is Ureide permease 1, found in Arabidopsis thaliana (Mouse-ear cress).